A 508-amino-acid chain; its full sequence is Photosystem II CP47 reaction center protein (508 aa).

Transmembrane regions (helical) follow at residues 21 to 36 (SVHI…WAGS), 101 to 115 (IMLS…IWHW), 140 to 156 (GIHL…FGAF), 203 to 218 (IAAG…FHLS), 237 to 252 (VLSS…AFVV), and 457 to 472 (SFAL…HGAR).

This sequence belongs to the PsbB/PsbC family. PsbB subfamily. In terms of assembly, PSII is composed of 1 copy each of membrane proteins PsbA, PsbB, PsbC, PsbD, PsbE, PsbF, PsbH, PsbI, PsbJ, PsbK, PsbL, PsbM, PsbT, PsbX, PsbY, PsbZ, Psb30/Ycf12, at least 3 peripheral proteins of the oxygen-evolving complex and a large number of cofactors. It forms dimeric complexes. It depends on Binds multiple chlorophylls. PSII binds additional chlorophylls, carotenoids and specific lipids. as a cofactor.

Its subcellular location is the plastid. It localises to the chloroplast thylakoid membrane. One of the components of the core complex of photosystem II (PSII). It binds chlorophyll and helps catalyze the primary light-induced photochemical processes of PSII. PSII is a light-driven water:plastoquinone oxidoreductase, using light energy to abstract electrons from H(2)O, generating O(2) and a proton gradient subsequently used for ATP formation. In Piper cenocladum (Ant piper), this protein is Photosystem II CP47 reaction center protein.